Consider the following 222-residue polypeptide: Collectrin (222 aa).

The first 14 residues, 1–14 (MLWALFFLVTTIHA), serve as a signal peptide directing secretion. Over 15–141 (ELCHPDAENA…LAPPMEPSVP (127 aa)) the chain is Extracellular. Residues 21-222 (AENAFKVRLS…LTEDERLTPL (202 aa)) enclose the Collectrin-like domain. N-linked (GlcNAc...) asparagine glycosylation is found at N76 and N93. A helical transmembrane segment spans residues 142-162 (VWIIVFGVIFCIVTVAIALLV). Topologically, residues 163-222 (LSGIRQRRRNNKGPPGVEDAEDKCENIITIENGIPCDPLDMKGGHINDGFLTEDERLTPL) are cytoplasmic. Phosphothreonine is present on residues T214 and T220.

This sequence belongs to the CLTRN family. In terms of assembly, monomer. Homodimer. Homodimer; dimerization prevents CLTRN cleavage by BACE2. Interacts with SNAPIN. Interacts with SLC6A18; this interaction regulates the trafficking of SLC6A18 to the cell membrane and its amino acid transporter activity. Interacts with SLC6A19; this interaction regulates the trafficking of SLC6A19 to the cell membrane and its amino acid transporter activity. Interacts with SLC6A20B. Post-translationally, glycosylated. Glycosylation is required for plasma membrane localization and for its cleavage by BACE2. In terms of processing, proteolytically processed in pancreatic beta cells by BACE2 leading to the generation and extracellular release of soluble CLTRN, and a corresponding cell-associated C-terminal fragment which is later cleaved by gamma-secretase. This shedding process inactivates CLTRN. Three cleavage sites have been identified for BACE2, two clustered sites after Phe-116 and Leu-118 and a more membrane proximal site at Phe-125; the preferred BACE2 cleavage site seems to be between Phe-125 and Leu-126, Phe-116 and Leu-118 act as alternative sites. In terms of tissue distribution, expressed on the apical surface of the proximal tubules in the renal cortex (at protein level). Kidney; collecting ducts and proximal tubule. Pancreas; beta cells of islets. Expressed in the cerebral cortex, hippocampus, brainstem and cerebellum.

It is found in the cell membrane. Plays an important role in amino acid transport by acting as binding partner of amino acid transporters SLC6A18 and SLC6A19, regulating their trafficking on the cell surface and their activity. May also play a role in trafficking of amino acid transporters SLC3A1 and SLC7A9 to the renal cortical cell membrane. Regulator of SNARE complex function. Stimulator of beta cell replication. The chain is Collectrin from Mus musculus (Mouse).